Here is a 140-residue protein sequence, read N- to C-terminus: Ribosome maturation factor RimP (140 aa).

The protein belongs to the RimP family.

It localises to the cytoplasm. Functionally, required for maturation of 30S ribosomal subunits. The polypeptide is Ribosome maturation factor RimP (Campylobacter jejuni subsp. jejuni serotype O:23/36 (strain 81-176)).